We begin with the raw amino-acid sequence, 1138 residues long: Trafficking protein particle complex subunit 9 (1138 aa).

Serine 557 and serine 944 each carry phosphoserine.

This sequence belongs to the NIBP family. Component of the multisubunit TRAPP (transport protein particle) complex, which includes at least TRAPPC2, TRAPPC2L, TRAPPC3, TRAPPC3L, TRAPPC4, TRAPPC5, TRAPPC8, TRAPPC9, TRAPPC10, TRAPPC11 and TRAPPC12. Directly interacts with IKBKB and MAP3K14.

The protein localises to the golgi apparatus. The protein resides in the cis-Golgi network. It localises to the endoplasmic reticulum. Its subcellular location is the cytoplasm. Its function is as follows. Functions as an activator of NF-kappa-B through increased phosphorylation of the IKK complex. May function in neuronal cells differentiation. May play a role in vesicular transport from endoplasmic reticulum to Golgi. This is Trafficking protein particle complex subunit 9 (TRAPPC9) from Bos taurus (Bovine).